A 510-amino-acid polypeptide reads, in one-letter code: 2,3-bisphosphoglycerate-independent phosphoglycerate mutase (510 aa).

Positions 14 and 64 each coordinate Mn(2+). Catalysis depends on S64, which acts as the Phosphoserine intermediate. Residues H125, 155–156 (RD), R187, R193, 259–262 (RADR), and K332 contribute to the substrate site. Mn(2+) is bound by residues D399, H403, D440, H441, and H459.

Belongs to the BPG-independent phosphoglycerate mutase family. Monomer. Mn(2+) serves as cofactor.

It catalyses the reaction (2R)-2-phosphoglycerate = (2R)-3-phosphoglycerate. The protein operates within carbohydrate degradation; glycolysis; pyruvate from D-glyceraldehyde 3-phosphate: step 3/5. Catalyzes the interconversion of 2-phosphoglycerate and 3-phosphoglycerate. The sequence is that of 2,3-bisphosphoglycerate-independent phosphoglycerate mutase from Pseudomonas syringae pv. syringae (strain B728a).